The following is a 396-amino-acid chain: Putative pyridoxal phosphate-dependent acyltransferase (396 aa).

Residue 111 to 112 (GF) participates in pyridoxal 5'-phosphate binding. His136 provides a ligand contact to substrate. Pyridoxal 5'-phosphate contacts are provided by residues Ser186, 211–214 (DDAH), and 241–244 (TLSK). Lys244 carries the post-translational modification N6-(pyridoxal phosphate)lysine. A substrate-binding site is contributed by Thr358.

Belongs to the class-II pyridoxal-phosphate-dependent aminotransferase family. In terms of assembly, homodimer. It depends on pyridoxal 5'-phosphate as a cofactor.

The sequence is that of Putative pyridoxal phosphate-dependent acyltransferase from Bacillus anthracis.